The chain runs to 396 residues: Phosphoglycerate kinase (396 aa).

Residues 20–22 (DIN), Arg35, 58–61 (HQGR), Arg115, and Arg155 contribute to the substrate site. ATP contacts are provided by residues Glu328 and 353–356 (GGDT).

This sequence belongs to the phosphoglycerate kinase family. As to quaternary structure, monomer.

Its subcellular location is the cytoplasm. It catalyses the reaction (2R)-3-phosphoglycerate + ATP = (2R)-3-phospho-glyceroyl phosphate + ADP. Its pathway is carbohydrate degradation; glycolysis; pyruvate from D-glyceraldehyde 3-phosphate: step 2/5. The polypeptide is Phosphoglycerate kinase (Natronomonas pharaonis (strain ATCC 35678 / DSM 2160 / CIP 103997 / JCM 8858 / NBRC 14720 / NCIMB 2260 / Gabara) (Halobacterium pharaonis)).